We begin with the raw amino-acid sequence, 428 residues long: Peptidase B (428 aa).

Mn(2+)-binding residues include Lys-195 and Asp-200. The active site involves Lys-207. Mn(2+) is bound by residues Asp-218, Asp-277, and Glu-279. Arg-281 is a catalytic residue.

It belongs to the peptidase M17 family. Homohexamer. The cofactor is Mn(2+).

Its subcellular location is the cytoplasm. The enzyme catalyses Release of an N-terminal amino acid, Xaa, from a peptide or arylamide. Xaa is preferably Glu or Asp but may be other amino acids, including Leu, Met, His, Cys and Gln.. Functionally, probably plays an important role in intracellular peptide degradation. This chain is Peptidase B, found in Klebsiella pneumoniae subsp. pneumoniae (strain ATCC 700721 / MGH 78578).